The following is a 617-amino-acid chain: Putative metal ion transporter C17A12.14 (617 aa).

The segment at 1–141 (MPSNTSRSVP…GKNTRDQPSP (141 aa)) is disordered. The residue at position 105 (Ser-105) is a Phosphoserine. Over residues 117-136 (SHPEDIQRKEFETENGKNTR) the composition is skewed to basic and acidic residues. Ser-152, Ser-162, Ser-226, and Ser-241 each carry phosphoserine. The next 2 membrane-spanning stretches (helical) occupy residues 560–580 (TILG…GMNV) and 590–610 (LGWF…SFIL).

Belongs to the CorA metal ion transporter (MIT) (TC 1.A.35) family. In terms of assembly, interacts with sad1.

The protein resides in the membrane. The polypeptide is Putative metal ion transporter C17A12.14 (Schizosaccharomyces pombe (strain 972 / ATCC 24843) (Fission yeast)).